Reading from the N-terminus, the 335-residue chain is Phosphatidylglycerol--prolipoprotein diacylglyceryl transferase (335 aa).

Helical transmembrane passes span 31 to 51 (IYWYGIIFVCGFLLAILTYSL), 67 to 87 (YIFLAIPMTIIGARLWSLAIG), and 100 to 120 (LAIQGGVIAGVLSAAIYFPLI). Arg163 is an a 1,2-diacyl-sn-glycero-3-phospho-(1'-sn-glycerol) binding site. The next 3 membrane-spanning stretches (helical) occupy residues 213–233 (PLFLYESFFNVIVFVFIYFGL), 235–255 (YIKQLKIGFVSMSYFFFYGVI), and 277–297 (SLLLIFGVLGALYVQFIAPIL).

The protein belongs to the Lgt family.

The protein localises to the cell membrane. The enzyme catalyses L-cysteinyl-[prolipoprotein] + a 1,2-diacyl-sn-glycero-3-phospho-(1'-sn-glycerol) = an S-1,2-diacyl-sn-glyceryl-L-cysteinyl-[prolipoprotein] + sn-glycerol 1-phosphate + H(+). It participates in protein modification; lipoprotein biosynthesis (diacylglyceryl transfer). Its function is as follows. Catalyzes the transfer of the diacylglyceryl group from phosphatidylglycerol to the sulfhydryl group of the N-terminal cysteine of a prolipoprotein, the first step in the formation of mature lipoproteins. The sequence is that of Phosphatidylglycerol--prolipoprotein diacylglyceryl transferase from Ureaplasma urealyticum serovar 10 (strain ATCC 33699 / Western).